The sequence spans 257 residues: Deoxyribose-phosphate aldolase (257 aa).

Residue D102 is the Proton donor/acceptor of the active site. Residue K166 is the Schiff-base intermediate with acetaldehyde of the active site. K198 serves as the catalytic Proton donor/acceptor.

The protein belongs to the DeoC/FbaB aldolase family. DeoC type 2 subfamily.

Its subcellular location is the cytoplasm. It catalyses the reaction 2-deoxy-D-ribose 5-phosphate = D-glyceraldehyde 3-phosphate + acetaldehyde. Its pathway is carbohydrate degradation; 2-deoxy-D-ribose 1-phosphate degradation; D-glyceraldehyde 3-phosphate and acetaldehyde from 2-deoxy-alpha-D-ribose 1-phosphate: step 2/2. Its function is as follows. Catalyzes a reversible aldol reaction between acetaldehyde and D-glyceraldehyde 3-phosphate to generate 2-deoxy-D-ribose 5-phosphate. The protein is Deoxyribose-phosphate aldolase of Shewanella woodyi (strain ATCC 51908 / MS32).